The chain runs to 150 residues: Small ribosomal subunit protein uS11 (150 aa).

Positions 130–150 are disordered; sequence DVTPIPSDSTRRKSGRRGRRL. The segment covering 141-150 has biased composition (basic residues); it reads RKSGRRGRRL.

This sequence belongs to the universal ribosomal protein uS11 family.

The protein is Small ribosomal subunit protein uS11 (RPS14) of Lupinus luteus (European yellow lupine).